The sequence spans 649 residues: Lipolysis-stimulated lipoprotein receptor (649 aa).

The span at 1-16 shows a compositional bias: gly residues; that stretch reads MQQDGLGVGTRNGSGK. Residues 1–21 are disordered; the sequence is MQQDGLGVGTRNGSGKGRSVH. Residues 1-259 are Extracellular-facing; the sequence is MQQDGLGVGT…PGFQAGPIED (259 aa). An Ig-like V-type domain is found at 86–234; sequence PARAIQVTVS…DLQGNNEAYA (149 aa). Cys-111 and Cys-218 are disulfide-bonded. A helical membrane pass occupies residues 260-280; it reads WLFVVVVCLAAFLIFLLLGIC. The Cytoplasmic segment spans residues 281 to 649; that stretch reads WCQCCPHTCC…LALSRESLVV (369 aa). Thr-336 carries the post-translational modification Phosphothreonine. Ser-365, Ser-371, Ser-389, Ser-432, and Ser-436 each carry phosphoserine. Residues 414–649 are disordered; it reads NFDPSRPGPP…LALSRESLVV (236 aa). Basic and acidic residues predominate over residues 426-444; the sequence is RVERAMSEVTSLHEDDWRS. Position 453 is a phosphothreonine (Thr-453). A phosphoserine mark is found at Ser-464, Ser-467, and Ser-493. Thr-501 is subject to Phosphothreonine. Residues 502–518 are compositionally biased toward polar residues; the sequence is PPSTAESGSRSPTSNGG. Phosphoserine occurs at positions 528 and 530. Over residues 529-565 the composition is skewed to basic and acidic residues; the sequence is RSRDDLYDQDDSRDFPRSRDPHYDDFRSRERPPADPR. Position 535 is a phosphotyrosine (Tyr-535). 2 positions are modified to phosphoserine: Ser-540 and Ser-579. The span at 589 to 609 shows a compositional bias: basic and acidic residues; it reads RLLEEAVRKKGSEERRRPHKE. At Ser-631 the chain carries Phosphoserine. Lys-638 is covalently cross-linked (Glycyl lysine isopeptide (Lys-Gly) (interchain with G-Cter in ubiquitin)). Residues Ser-643 and Ser-646 each carry the phosphoserine modification.

It belongs to the immunoglobulin superfamily. LISCH7 family. In terms of assembly, homotrimer or homotetramer. Assembles into cell-cell contacts. Interacts (via the cytoplasmic domain) with MARVELD2 (via C-terminal cytoplasmic domain); the interaction is required to recruit MARVELD2 to tricellular contacts. Interacts with OCLN. In terms of processing, phosphorylation at Ser-365 by MAPK8/JNK1 and MAPK9/JNK2 may be required for exclusive localization at tricellular tight junstions. Polyubiquitinated at Lys-638 via 'Lys-63'-linked ubiquitin chains; deubiquitinated by USP53.

The protein localises to the cell membrane. The protein resides in the cell junction. It localises to the tight junction. Its function is as follows. Probable role in the clearance of triglyceride-rich lipoprotein from blood. Binds chylomicrons, LDL and VLDL in presence of free fatty acids and allows their subsequent uptake in the cells. Maintains epithelial barrier function by recruiting MARVELD2/tricellulin to tricellular tight junctions. The protein is Lipolysis-stimulated lipoprotein receptor of Homo sapiens (Human).